Reading from the N-terminus, the 94-residue chain is Co-chaperonin GroES (94 aa).

Belongs to the GroES chaperonin family. Heptamer of 7 subunits arranged in a ring. Interacts with the chaperonin GroEL.

The protein localises to the cytoplasm. Functionally, together with the chaperonin GroEL, plays an essential role in assisting protein folding. The GroEL-GroES system forms a nano-cage that allows encapsulation of the non-native substrate proteins and provides a physical environment optimized to promote and accelerate protein folding. GroES binds to the apical surface of the GroEL ring, thereby capping the opening of the GroEL channel. In Bacillus cereus (strain ATCC 14579 / DSM 31 / CCUG 7414 / JCM 2152 / NBRC 15305 / NCIMB 9373 / NCTC 2599 / NRRL B-3711), this protein is Co-chaperonin GroES.